The primary structure comprises 180 residues: MTTYGTNQKSSNDLAPKLEYITRGINQHKRSGLATRRPWKQMLDLGSFNFPRKLATVITRIRANTVYFQTNYTIVVLFSVFLSLIWNPFSLLVLLALLGAWLFLYFLRDEPLTVFDREIDHRIVLIIMSVITLSILFLTDAKLNIAVAIVAGALAVLSHAAVRKTEDLFQTDEETSLLNP.

The next 4 membrane-spanning stretches (helical) occupy residues 63-83, 84-104, 123-143, and 145-165; these read ANTV…VFLS, LIWN…WLFL, IVLI…DAKL, and IAVA…VRKT.

The protein belongs to the PRA1 family. As to quaternary structure, interacts with PRA1F2. As to expression, expressed in hypocotyls, leaf bases and shoot apex.

The protein localises to the endosome membrane. In terms of biological role, may be involved in both secretory and endocytic intracellular trafficking in the endosomal/prevacuolar compartments. This is PRA1 family protein F1 (PRA1F1) from Arabidopsis thaliana (Mouse-ear cress).